The following is a 138-amino-acid chain: Small ribosomal subunit protein uS12 (138 aa).

The residue at position 89 (Asp89) is a 3-methylthioaspartic acid. A disordered region spans residues 107-138; the sequence is VSGRMQRRSKYGAKFPKTGTGKTKAVPTKNKK.

It belongs to the universal ribosomal protein uS12 family. As to quaternary structure, part of the 30S ribosomal subunit. Contacts proteins S8 and S17. May interact with IF1 in the 30S initiation complex.

In terms of biological role, with S4 and S5 plays an important role in translational accuracy. Its function is as follows. Interacts with and stabilizes bases of the 16S rRNA that are involved in tRNA selection in the A site and with the mRNA backbone. Located at the interface of the 30S and 50S subunits, it traverses the body of the 30S subunit contacting proteins on the other side and probably holding the rRNA structure together. The combined cluster of proteins S8, S12 and S17 appears to hold together the shoulder and platform of the 30S subunit. The chain is Small ribosomal subunit protein uS12 from Azobacteroides pseudotrichonymphae genomovar. CFP2.